Here is a 239-residue protein sequence, read N- to C-terminus: Uridylate kinase (239 aa).

13–16 contacts ATP; sequence KLSG. Gly-55 serves as a coordination point for UMP. ATP is bound by residues Gly-56 and Arg-60. UMP-binding positions include Asp-75 and 136–143; that span reads TGNPFFTT. Residues Thr-163, Asn-164, Tyr-169, and Asp-172 each contribute to the ATP site.

This sequence belongs to the UMP kinase family. In terms of assembly, homohexamer.

It localises to the cytoplasm. It carries out the reaction UMP + ATP = UDP + ADP. Its pathway is pyrimidine metabolism; CTP biosynthesis via de novo pathway; UDP from UMP (UMPK route): step 1/1. Inhibited by UTP. Catalyzes the reversible phosphorylation of UMP to UDP. The protein is Uridylate kinase of Neisseria meningitidis serogroup A / serotype 4A (strain DSM 15465 / Z2491).